The sequence spans 292 residues: WRKY transcription factor 55 (292 aa).

The disordered stretch occupies residues 133–155 (VERSGASGSSTPRQRRRKDEGEE). The WRKY DNA-binding region spans 167 to 235 (NTDLPPDDNH…YRGSHTCYNS (69 aa)).

The protein belongs to the WRKY group III family.

The protein localises to the nucleus. In terms of biological role, transcription factor. Interacts specifically with the W box (5'-(T)TGAC[CT]-3'), a frequently occurring elicitor-responsive cis-acting element. This chain is WRKY transcription factor 55 (WRKY55), found in Arabidopsis thaliana (Mouse-ear cress).